Consider the following 199-residue polypeptide: Fe/S biogenesis protein NfuA (199 aa).

2 residues coordinate [4Fe-4S] cluster: Cys-151 and Cys-154.

It belongs to the NfuA family. In terms of assembly, homodimer. Requires [4Fe-4S] cluster as cofactor.

Involved in iron-sulfur cluster biogenesis. Binds a 4Fe-4S cluster, can transfer this cluster to apoproteins, and thereby intervenes in the maturation of Fe/S proteins. Could also act as a scaffold/chaperone for damaged Fe/S proteins. This Xanthomonas euvesicatoria pv. vesicatoria (strain 85-10) (Xanthomonas campestris pv. vesicatoria) protein is Fe/S biogenesis protein NfuA.